A 307-amino-acid polypeptide reads, in one-letter code: Voltage-dependent anion channel-forming protein alr2987 (307 aa).

Transmembrane regions (helical) follow at residues 19 to 39, 47 to 67, 209 to 229, and 238 to 258; these read VIGA…LVTL, VSQP…LLVF, PLAY…LLPF, and WTGL…AIGL.

Belongs to the anion channel-forming bestrophin (TC 1.A.46) family.

Its subcellular location is the cell membrane. The sequence is that of Voltage-dependent anion channel-forming protein alr2987 from Nostoc sp. (strain PCC 7120 / SAG 25.82 / UTEX 2576).